The following is a 468-amino-acid chain: ATP synthase subunit beta (468 aa).

150 to 157 lines the ATP pocket; the sequence is GGAGVGKT.

This sequence belongs to the ATPase alpha/beta chains family. As to quaternary structure, F-type ATPases have 2 components, CF(1) - the catalytic core - and CF(0) - the membrane proton channel. CF(1) has five subunits: alpha(3), beta(3), gamma(1), delta(1), epsilon(1). CF(0) has three main subunits: a(1), b(2) and c(9-12). The alpha and beta chains form an alternating ring which encloses part of the gamma chain. CF(1) is attached to CF(0) by a central stalk formed by the gamma and epsilon chains, while a peripheral stalk is formed by the delta and b chains.

It localises to the cell inner membrane. The catalysed reaction is ATP + H2O + 4 H(+)(in) = ADP + phosphate + 5 H(+)(out). Functionally, produces ATP from ADP in the presence of a proton gradient across the membrane. The catalytic sites are hosted primarily by the beta subunits. The sequence is that of ATP synthase subunit beta from Acidovorax ebreus (strain TPSY) (Diaphorobacter sp. (strain TPSY)).